A 584-amino-acid polypeptide reads, in one-letter code: Potassium-transporting ATPase potassium-binding subunit (584 aa).

10 helical membrane passes run F8 to F28, S65 to Q85, V139 to F159, V172 to L192, F262 to F282, G292 to W312, G398 to G418, I440 to G460, M507 to A527, and L544 to A564.

Belongs to the KdpA family. As to quaternary structure, the system is composed of three essential subunits: KdpA, KdpB and KdpC.

It is found in the cell membrane. Functionally, part of the high-affinity ATP-driven potassium transport (or Kdp) system, which catalyzes the hydrolysis of ATP coupled with the electrogenic transport of potassium into the cytoplasm. This subunit binds the extracellular potassium ions and delivers the ions to the membrane domain of KdpB through an intramembrane tunnel. The polypeptide is Potassium-transporting ATPase potassium-binding subunit (Methanoregula boonei (strain DSM 21154 / JCM 14090 / 6A8)).